The following is a 661-amino-acid chain: Junctophilin-1 (661 aa).

At 1 to 639 (MTGGRFDFDD…EKEANSGPNS (639 aa)) the chain is on the cytoplasmic side. 5 MORN repeats span residues 14–36 (YCGGWEEGKAHGHGICTGPKGQG), 38–59 (YSGSWSHGFEVVGGYTWPSGNT), 60–82 (YQGYWAQGKRHGLGVETKGKWMY), 106–128 (YEGTWSNGLQDGYGVETYGDGGT), and 129–151 (YQGQWAGGMRHGYGVRQSVPYGM). 3 positions are modified to phosphoserine: Ser-157, Ser-216, and Ser-220. The interval 228-247 (SKSSISSKRSSVRSDAAMSR) is disordered. 2 MORN repeats span residues 281–303 (YMGEWKNDKRNGFGVSERSNGMK) and 304–326 (YEGEWANNKRHGYGCTVFPDGSK). The span at 433-454 (DAKENPEEKVPEKPPTPKESPH) shows a compositional bias: basic and acidic residues. The interval 433 to 631 (DAKENPEEKV…SNDSCPALEK (199 aa)) is disordered. Thr-448 carries the phosphothreonine modification. Position 452 is a phosphoserine (Ser-452). The residue at position 461 (Thr-461) is a Phosphothreonine. Ser-465, Ser-469, and Ser-475 each carry phosphoserine. Residues 599–613 (VAKESKAEPKAKKSE) show a composition bias toward basic and acidic residues. The chain crosses the membrane as a helical; Anchor for type IV membrane protein span at residues 640–660 (IMIVLVMLLNIGLAILFVHFL).

This sequence belongs to the junctophilin family. In terms of tissue distribution, abundantly expressed in skeletal muscle. Very low levels in heart.

It is found in the cell membrane. The protein localises to the endoplasmic reticulum membrane. Its subcellular location is the sarcoplasmic reticulum membrane. In terms of biological role, junctophilins contribute to the formation of junctional membrane complexes (JMCs) which link the plasma membrane with the endoplasmic or sarcoplasmic reticulum in excitable cells. Provides a structural foundation for functional cross-talk between the cell surface and intracellular calcium release channels. JPH1 contributes to the construction of the skeletal muscle triad by linking the t-tubule (transverse-tubule) and SR (sarcoplasmic reticulum) membranes. The protein is Junctophilin-1 (JPH1) of Homo sapiens (Human).